The sequence spans 837 residues: Neural cell adhesion molecule 2 (837 aa).

Positions M1–A19 are cleaved as a signal peptide. Over L20 to N697 the chain is Extracellular. Ig-like C2-type domains follow at residues L21–V108, Q113–I202, P208–Q297, P302–D396, and P401–A491. Intrachain disulfides connect C42–C93 and C136–C186. 2 N-linked (GlcNAc...) asparagine glycosylation sites follow: N177 and N219. C232 and C281 form a disulfide bridge. A glycan (N-linked (GlcNAc...) asparagine) is linked at N309. Cysteines 322 and 380 form a disulfide. N-linked (GlcNAc...) asparagine glycans are attached at residues N406, N419, N445, N474, and N562. C422 and C475 are joined by a disulfide. Fibronectin type-III domains follow at residues S498–V591 and E593–P688. A helical transmembrane segment spans residues G698–V718. The Cytoplasmic portion of the chain corresponds to T719–A837. Positions G764–G785 are enriched in basic and acidic residues. The interval G764–T818 is disordered. S765 is subject to Phosphoserine. T780 carries the phosphothreonine modification. S786 carries the phosphoserine modification. Over residues N789–T798 the composition is skewed to low complexity. Residues E799–L814 are compositionally biased toward basic and acidic residues.

Expressed most strongly in adult and fetal brain.

The protein resides in the cell membrane. In terms of biological role, may play important roles in selective fasciculation and zone-to-zone projection of the primary olfactory axons. In Homo sapiens (Human), this protein is Neural cell adhesion molecule 2 (NCAM2).